A 177-amino-acid polypeptide reads, in one-letter code: tRNA (cytidine(56)-2'-O)-methyltransferase (177 aa).

Residues L84 and 109–113 each bind S-adenosyl-L-methionine; that span reads GAEKV.

This sequence belongs to the aTrm56 family. In terms of assembly, homodimer.

It localises to the cytoplasm. The catalysed reaction is cytidine(56) in tRNA + S-adenosyl-L-methionine = 2'-O-methylcytidine(56) in tRNA + S-adenosyl-L-homocysteine + H(+). In terms of biological role, specifically catalyzes the AdoMet-dependent 2'-O-ribose methylation of cytidine at position 56 in tRNAs. This chain is tRNA (cytidine(56)-2'-O)-methyltransferase, found in Methanosarcina barkeri (strain Fusaro / DSM 804).